The chain runs to 108 residues: Evasin P1156 (108 aa).

Residues 1–28 form the signal peptide; that stretch reads MEVKTYAFLQIAVFIFLGMQIFASLTDA. 3 disulfide bridges follow: cysteine 41/cysteine 63, cysteine 45/cysteine 65, and cysteine 56/cysteine 76. N-linked (GlcNAc...) asparagine glycosylation occurs at asparagine 44. The tract at residues 89–108 is disordered; sequence NPSDSEIEAAKPKRSDTLSH. Positions 96–108 are enriched in basic and acidic residues; the sequence is EAAKPKRSDTLSH.

Its subcellular location is the secreted. Salivary chemokine-binding protein which has chemokine-neutralizing activity and binds to host chemokines CXCL1, CXCL2, CXCL3, CXCL5, CXCL6 and CXCL8. The protein is Evasin P1156 of Ixodes ricinus (Common tick).